The sequence spans 314 residues: Flotillin-like protein FloA (314 aa).

The chain crosses the membrane as a helical span at residues 4-24 (IGPIIIAVLIIIFLIVFFTLV).

Belongs to the flotillin-like FloA family. Homooligomerizes.

It is found in the cell membrane. It localises to the membrane raft. Functionally, found in functional membrane microdomains (FMM) that may be equivalent to eukaryotic membrane rafts. FMMs are highly dynamic and increase in number as cells age. Flotillins are thought to be important factors in membrane fluidity. This is Flotillin-like protein FloA from Listeria innocua serovar 6a (strain ATCC BAA-680 / CLIP 11262).